The chain runs to 425 residues: Serine--tRNA ligase (425 aa).

230–232 (TAE) provides a ligand contact to L-serine. 261–263 (RSE) contacts ATP. Residue Glu284 participates in L-serine binding. Position 348-351 (348-351 (EISS)) interacts with ATP. Residue Ser384 coordinates L-serine.

The protein belongs to the class-II aminoacyl-tRNA synthetase family. Type-1 seryl-tRNA synthetase subfamily. Homodimer. The tRNA molecule binds across the dimer.

It localises to the cytoplasm. The enzyme catalyses tRNA(Ser) + L-serine + ATP = L-seryl-tRNA(Ser) + AMP + diphosphate + H(+). It carries out the reaction tRNA(Sec) + L-serine + ATP = L-seryl-tRNA(Sec) + AMP + diphosphate + H(+). It functions in the pathway aminoacyl-tRNA biosynthesis; selenocysteinyl-tRNA(Sec) biosynthesis; L-seryl-tRNA(Sec) from L-serine and tRNA(Sec): step 1/1. Functionally, catalyzes the attachment of serine to tRNA(Ser). Is also able to aminoacylate tRNA(Sec) with serine, to form the misacylated tRNA L-seryl-tRNA(Sec), which will be further converted into selenocysteinyl-tRNA(Sec). The chain is Serine--tRNA ligase from Streptococcus pyogenes serotype M49 (strain NZ131).